The following is a 195-amino-acid chain: Calcium channel flower (195 aa).

3 helical membrane-spanning segments follow: residues 34–54 (LLGI…VISI), 66–88 (IIQM…VCIE), and 117–137 (IFMC…ATGV).

The protein belongs to the calcium channel flower family. Homomultimer. Associates with the dally/ magu complex.

It localises to the cell membrane. The protein resides in the cytoplasmic vesicle. Its subcellular location is the secretory vesicle. The protein localises to the synaptic vesicle membrane. It is found in the presynaptic cell membrane. It localises to the endosome. Its activity is regulated as follows. Channel activity is inhibited by La(3+), which reduces Ca(2+) influx and thus inhibits it's function in promoting activity-dependent bulk endocytosis (ADBE) in response to high stimuli. In terms of biological role, transmembrane protein which mediates synaptic endocytosis, fitness-based cell culling, neuronal culling, morphogen gradient scaling, and calcium transport. Regulates synaptic endocytosis and hence couples exo- with endocytosis. Controls two major modes of synaptic vesicle (SV) endocytosis in the synaptic boutons of neuromuscular junctions (NMJs); Ca(2+) channel-independent Clathrin-mediated endocytosis (CME) in response to mild stimulation, and Ca(2+) channel-dependent activity-dependent bulk endocytosis (ADBE) in response to strong stimulation. Functions in ADBE and subsequent SV reformation from bulk endosomes by initiating Ca(2+) channel-dependent phosphatidylinositol 4,5-bisphosphate (PtdIns(4,5)P2) compartmentalization in synaptic boutons. There it acts at the periactive zone to provide the low Ca(2+) levels required to initiate Calcineurin activation and upregulate PtdIns(4,5)P2. Conversely PtdIns(4,5)P2 enhances fwe Ca(2+) channel-activity, establishing a positive feedback loop that induces PtdIns(4,5)P2 microdomain at the periactive zone. These microdomains trigger bulk membrane invagination (i.e. ADBE) by triggering actin polymerization while also promoting localization of fwe to bulk endosomes, thereby removing the ADBE trigger to reduce endocytosis and prevent excess membrane uptake. PtdIns(4,5)P2 then promotes SV reformation from the bulk endosomes, to coordinate ADBE and subsequent SV reformation. Different combinations of the flower isoforms at the cell membrane are also required for the identification and elimination of suboptimal or supernumerary cells during development, regeneration, and adulthood. Required for the recognition and elimination of unfit cells in the developing wing during cell competition. In the developing pupal retina, mediates the elimination of unwanted postmitotic neurons, including supernumerary photoreceptor neurons that form at the periphery of the retina and are contained within incomplete ommatidia units. Also required for efficient elimination and replacement of old neurons by newly generated neurons during regeneration in the adult brain following mechanical injury. Downstream of the flower fitness fingerprints, cells identified as unwanted or unfit are eliminated via apoptosis through the expression of ahuizotl (azot). However, the cells marked for elimination by the flower isoforms only undergo apoptosis if additional thresholds are met; (1) their neighboring fit/healthy cells express different levels of the fwe isoforms, and (2) the levels of the protective signal SPARC expressed by the loser or unwanted cells are unable to inhibit caspase activation. These additional thresholds for flower-mediated apoptosis, allows useful cells to recover from transient and limited stress before they are unnecessarily eliminated. Functions with dally and magu in a mechanism of scaling, which utilises apoptosis to ensure that the dpp morphogen gradient, which mediates organ growth, remains proportional to the size of the growing wing. In this mechanism, fwe represses dally- and Magu-dependent activity in expanding the gradient, and dally/Magu inhibits fwe-dependent apoptosis to keep cell death rate low. When the levels of these different proteins are optimally regulated the gradient correctly scales with organ growth but when this fails, fwe-mediated apoptosis is activated to trim the developing tissue to match the correct size of the gradient. The protein is Calcium channel flower of Drosophila ananassae (Fruit fly).